The chain runs to 459 residues: GTPase Der (459 aa).

EngA-type G domains follow at residues 3 to 167 (FTFA…PEPE) and 188 to 363 (IRVA…AVWN). Residues 9–16 (GRPNVGKS), 56–60 (DTAGL), 119–122 (NKSE), 194–201 (GRPNAGKS), 241–245 (DTAGL), and 306–309 (NKWD) each bind GTP. The region spanning 364 to 448 (TRVSTAALNR…PVRITLREKA (85 aa)) is the KH-like domain.

The protein belongs to the TRAFAC class TrmE-Era-EngA-EngB-Septin-like GTPase superfamily. EngA (Der) GTPase family. In terms of assembly, associates with the 50S ribosomal subunit.

GTPase that plays an essential role in the late steps of ribosome biogenesis. This Rhodopseudomonas palustris (strain HaA2) protein is GTPase Der.